The following is a 512-amino-acid chain: tRNA-2-methylthio-N(6)-dimethylallyladenosine synthase (512 aa).

The interval 1 to 20 (MLQQADGVSPDRSSCDTPAP) is disordered. The MTTase N-terminal domain maps to 21–137 (RTFEVRTYGC…LPTLLDRARH (117 aa)). [4Fe-4S] cluster-binding residues include Cys-30, Cys-66, Cys-100, Cys-174, Cys-178, and Cys-181. One can recognise a Radical SAM core domain in the interval 160-397 (RESAYAAWVS…ELQERISWEE (238 aa)). Residues 399-469 (RAQIGREVEL…PHHLIADAGP (71 aa)) form the TRAM domain. The span at 470-486 (AEHRRTRAGDAHAEGRT) shows a compositional bias: basic and acidic residues. The disordered stretch occupies residues 470–512 (AEHRRTRAGDAHAEGRTPKTGVGLGMPGIGAPEPAPVTQGCAL).

The protein belongs to the methylthiotransferase family. MiaB subfamily. In terms of assembly, monomer. [4Fe-4S] cluster is required as a cofactor.

The protein resides in the cytoplasm. The catalysed reaction is N(6)-dimethylallyladenosine(37) in tRNA + (sulfur carrier)-SH + AH2 + 2 S-adenosyl-L-methionine = 2-methylsulfanyl-N(6)-dimethylallyladenosine(37) in tRNA + (sulfur carrier)-H + 5'-deoxyadenosine + L-methionine + A + S-adenosyl-L-homocysteine + 2 H(+). Its function is as follows. Catalyzes the methylthiolation of N6-(dimethylallyl)adenosine (i(6)A), leading to the formation of 2-methylthio-N6-(dimethylallyl)adenosine (ms(2)i(6)A) at position 37 in tRNAs that read codons beginning with uridine. This chain is tRNA-2-methylthio-N(6)-dimethylallyladenosine synthase, found in Mycolicibacterium gilvum (strain PYR-GCK) (Mycobacterium gilvum (strain PYR-GCK)).